The sequence spans 270 residues: 4-hydroxy-tetrahydrodipicolinate reductase (270 aa).

NAD(+)-binding positions include 11–16 (GAGGRM) and Glu37. An NADP(+)-binding site is contributed by Arg38. NAD(+) contacts are provided by residues 101 to 103 (GTT) and 125 to 128 (APNM). His158 functions as the Proton donor/acceptor in the catalytic mechanism. A (S)-2,3,4,5-tetrahydrodipicolinate-binding site is contributed by His159. Lys162 serves as the catalytic Proton donor. 168–169 (GT) serves as a coordination point for (S)-2,3,4,5-tetrahydrodipicolinate.

This sequence belongs to the DapB family.

It is found in the cytoplasm. It catalyses the reaction (S)-2,3,4,5-tetrahydrodipicolinate + NAD(+) + H2O = (2S,4S)-4-hydroxy-2,3,4,5-tetrahydrodipicolinate + NADH + H(+). The catalysed reaction is (S)-2,3,4,5-tetrahydrodipicolinate + NADP(+) + H2O = (2S,4S)-4-hydroxy-2,3,4,5-tetrahydrodipicolinate + NADPH + H(+). It functions in the pathway amino-acid biosynthesis; L-lysine biosynthesis via DAP pathway; (S)-tetrahydrodipicolinate from L-aspartate: step 4/4. Functionally, catalyzes the conversion of 4-hydroxy-tetrahydrodipicolinate (HTPA) to tetrahydrodipicolinate. The polypeptide is 4-hydroxy-tetrahydrodipicolinate reductase (Shewanella sp. (strain W3-18-1)).